The chain runs to 506 residues: NAD(P)H-quinone oxidoreductase subunit 2 (506 aa).

Helical transmembrane passes span 14–34, 42–62, 79–99, 108–128, 132–152, 167–187, 206–226, 240–260, 276–296, 302–322, 330–350, 374–394, and 409–429; these read AIIP…VDLA, WAPS…TLQW, LAIA…LISW, PIGE…LLCG, LISV…LSGY, LLVG…LYGL, FITS…IAAV, PTPV…AFAI, LLFT…ALAQ, MLAY…VSGT, VLYL…VILF, LGLS…GFFG, and LLVI…ISVI.

Belongs to the complex I subunit 2 family. In terms of assembly, NDH-1 can be composed of about 15 different subunits; different subcomplexes with different compositions have been identified which probably have different functions.

The protein resides in the cellular thylakoid membrane. The catalysed reaction is a plastoquinone + NADH + (n+1) H(+)(in) = a plastoquinol + NAD(+) + n H(+)(out). It carries out the reaction a plastoquinone + NADPH + (n+1) H(+)(in) = a plastoquinol + NADP(+) + n H(+)(out). In terms of biological role, NDH-1 shuttles electrons from an unknown electron donor, via FMN and iron-sulfur (Fe-S) centers, to quinones in the respiratory and/or the photosynthetic chain. The immediate electron acceptor for the enzyme in this species is believed to be plastoquinone. Couples the redox reaction to proton translocation, and thus conserves the redox energy in a proton gradient. Cyanobacterial NDH-1 also plays a role in inorganic carbon-concentration. The protein is NAD(P)H-quinone oxidoreductase subunit 2 of Prochlorococcus marinus (strain MIT 9301).